The chain runs to 212 residues: ER lumen protein-retaining receptor 2 (212 aa).

Residues 1-4 (MNIF) lie on the Lumenal side of the membrane. A helical membrane pass occupies residues 5–24 (RLTGDLSHLAAIVILLLKIW). Residues 25 to 32 (KTRSCAGI) lie on the Cytoplasmic side of the membrane. The chain crosses the membrane as a helical span at residues 33-52 (SGKSQLLFALVFTTRYLDLF). Positions 47–48 (RY) are interaction with the K-D-E-L motif on target proteins. Residues 53–58 (TSFISL) are Lumenal-facing. Residues 59–79 (YNTSMKLIYIACSYATVYLIY) form a helical membrane-spanning segment. At 80-92 (MKFKATYDGNHDT) the chain is on the cytoplasmic side. Residues 93–110 (FRVEFLVVPVGGLSFLVN) traverse the membrane as a helical segment. Residues 111–116 (HDFSPL) lie on the Lumenal side of the membrane. A helical membrane pass occupies residues 117–135 (EILWTFSIYLESVAILPQL). Residues 136 to 149 (FMISKTGEAETITT) are Cytoplasmic-facing. Residues 150–168 (HYLFFLGLYRALYLVNWIW) traverse the membrane as a helical segment. The interval 159–169 (RALYLVNWIWR) is interaction with the K-D-E-L motif on target proteins. Residues 169 to 178 (RFYFEGFFDL) are Lumenal-facing. Residues 179–199 (IAVVAGVVQTILYCDFFYLYI) form a helical membrane-spanning segment. At 200 to 212 (TKVLKGKKLSLPA) the chain is on the cytoplasmic side. The interval 204–207 (KGKK) is important for recycling of cargo proteins with the sequence motif K-D-E-L from the Golgi to the endoplasmic reticulum.

The protein belongs to the ERD2 family.

It localises to the endoplasmic reticulum membrane. The protein resides in the golgi apparatus membrane. It is found in the cytoplasmic vesicle. Its subcellular location is the COPI-coated vesicle membrane. Membrane receptor that binds the K-D-E-L sequence motif in the C-terminal part of endoplasmic reticulum resident proteins and maintains their localization in that compartment by participating to their vesicle-mediated recycling back from the Golgi. Binding is pH dependent, and is optimal at pH 5-5.4. In Mus musculus (Mouse), this protein is ER lumen protein-retaining receptor 2 (Kdelr2).